Here is a 334-residue protein sequence, read N- to C-terminus: Ornithine carbamoyltransferase (334 aa).

Residues 57–60, glutamine 84, arginine 108, and 135–138 each bind carbamoyl phosphate; these read STRT and HPTQ. Residues asparagine 169, aspartate 233, and 237 to 238 contribute to the L-ornithine site; that span reads SM. Residues 275–276 and arginine 320 contribute to the carbamoyl phosphate site; that span reads CL.

The protein belongs to the aspartate/ornithine carbamoyltransferase superfamily. OTCase family.

It is found in the cytoplasm. It carries out the reaction carbamoyl phosphate + L-ornithine = L-citrulline + phosphate + H(+). Its pathway is amino-acid biosynthesis; L-arginine biosynthesis; L-arginine from L-ornithine and carbamoyl phosphate: step 1/3. In terms of biological role, reversibly catalyzes the transfer of the carbamoyl group from carbamoyl phosphate (CP) to the N(epsilon) atom of ornithine (ORN) to produce L-citrulline. In Vibrio parahaemolyticus serotype O3:K6 (strain RIMD 2210633), this protein is Ornithine carbamoyltransferase.